The sequence spans 802 residues: ATP-dependent zinc metalloprotease FTSH 7, chloroplastic (802 aa).

Residues 1 to 55 (MTTTFEFLQPRIHGFATCCSSNSLLYSKASRFFNDRCRVYRQNPNRFVSNSITLP) constitute a chloroplast transit peptide. The disordered stretch occupies residues 87 to 117 (CQEDDQNESSSEEEESSQSTPAKSERKREKK). The segment covering 88–102 (QEDDQNESSSEEEES) has biased composition (acidic residues). Transmembrane regions (helical) follow at residues 134–154 (IIQA…MFVM) and 268–288 (GGFF…AGLI). ATP is bound at residue 365–372 (GLPGTGKT). Histidine 590 contacts Zn(2+). Glutamate 591 is a catalytic residue. Zn(2+) is bound by residues histidine 594 and aspartate 673.

The protein in the N-terminal section; belongs to the AAA ATPase family. It in the C-terminal section; belongs to the peptidase M41 family. Requires Zn(2+) as cofactor.

It is found in the plastid. It localises to the chloroplast thylakoid membrane. Functionally, probable ATP-dependent zinc metallopeptidase. In Arabidopsis thaliana (Mouse-ear cress), this protein is ATP-dependent zinc metalloprotease FTSH 7, chloroplastic (FTSH7).